Here is a 155-residue protein sequence, read N- to C-terminus: Endoribonuclease YbeY (155 aa).

The Zn(2+) site is built by H114, H118, and H124.

Belongs to the endoribonuclease YbeY family. It depends on Zn(2+) as a cofactor.

The protein resides in the cytoplasm. In terms of biological role, single strand-specific metallo-endoribonuclease involved in late-stage 70S ribosome quality control and in maturation of the 3' terminus of the 16S rRNA. The chain is Endoribonuclease YbeY from Escherichia coli O1:K1 / APEC.